Consider the following 185-residue polypeptide: V-type ATP synthase subunit E (185 aa).

It belongs to the V-ATPase E subunit family.

Functionally, produces ATP from ADP in the presence of a proton gradient across the membrane. The protein is V-type ATP synthase subunit E of Deinococcus geothermalis (strain DSM 11300 / CIP 105573 / AG-3a).